Here is a 913-residue protein sequence, read N- to C-terminus: DNA polymerase I (913 aa).

A 5'-3' exonuclease domain is found at 1 to 305; it reads MSQAPLVLVD…AGENGEAETP (305 aa). A 3'-5' exonuclease domain is found at 306 to 501; that stretch reads IQAEVDYDVV…LHQALWQKLE (196 aa). Residues 505 to 913 form a polymerase region; the sequence is SLARVLTDIE…GVGSNWDEAH (409 aa).

Belongs to the DNA polymerase type-A family. In terms of assembly, single-chain monomer with multiple functions.

The enzyme catalyses DNA(n) + a 2'-deoxyribonucleoside 5'-triphosphate = DNA(n+1) + diphosphate. In terms of biological role, in addition to polymerase activity, this DNA polymerase exhibits 3'-5' and 5'-3' exonuclease activity. The sequence is that of DNA polymerase I (polA) from Pseudomonas aeruginosa (strain ATCC 15692 / DSM 22644 / CIP 104116 / JCM 14847 / LMG 12228 / 1C / PRS 101 / PAO1).